Consider the following 101-residue polypeptide: Rho GTPase-activating protein 39 (101 aa).

Positions 1–96 (YEQCIAHYES…VLIQHLDTSF (96 aa)) constitute a Rho-GAP domain.

In terms of tissue distribution, preoptic area and testis.

This is Rho GTPase-activating protein 39 (Arhgap39) from Rattus norvegicus (Rat).